The following is a 377-amino-acid chain: Erythronate-4-phosphate dehydrogenase (377 aa).

Substrate-binding residues include Ser-45 and Thr-66. NAD(+) contacts are provided by Asp-146 and Thr-175. Arg-208 is a catalytic residue. Asp-232 contacts NAD(+). Glu-237 is an active-site residue. The active-site Proton donor is the His-254. An NAD(+)-binding site is contributed by Gly-257. A substrate-binding site is contributed by Tyr-258.

The protein belongs to the D-isomer specific 2-hydroxyacid dehydrogenase family. PdxB subfamily. As to quaternary structure, homodimer.

It is found in the cytoplasm. The catalysed reaction is 4-phospho-D-erythronate + NAD(+) = (R)-3-hydroxy-2-oxo-4-phosphooxybutanoate + NADH + H(+). It participates in cofactor biosynthesis; pyridoxine 5'-phosphate biosynthesis; pyridoxine 5'-phosphate from D-erythrose 4-phosphate: step 2/5. In terms of biological role, catalyzes the oxidation of erythronate-4-phosphate to 3-hydroxy-2-oxo-4-phosphonooxybutanoate. This is Erythronate-4-phosphate dehydrogenase from Sodalis glossinidius (strain morsitans).